Reading from the N-terminus, the 95-residue chain is MILVTYDVNTVEPGGRRRLRQVAKACQDYGQRVQNSVFEVEVDPARWVALKARLEAIIDPALDSLRYYDLGANWQRRVDHVGAKPAVDLHGPLIL.

A Mg(2+)-binding site is contributed by Asp7.

This sequence belongs to the CRISPR-associated endoribonuclease Cas2 protein family. As to quaternary structure, homodimer, forms a heterotetramer with a Cas1 homodimer. Mg(2+) is required as a cofactor.

Functionally, CRISPR (clustered regularly interspaced short palindromic repeat), is an adaptive immune system that provides protection against mobile genetic elements (viruses, transposable elements and conjugative plasmids). CRISPR clusters contain sequences complementary to antecedent mobile elements and target invading nucleic acids. CRISPR clusters are transcribed and processed into CRISPR RNA (crRNA). Functions as a ssRNA-specific endoribonuclease. Involved in the integration of spacer DNA into the CRISPR cassette. The chain is CRISPR-associated endoribonuclease Cas2 3 from Rhodospirillum rubrum (strain ATCC 11170 / ATH 1.1.1 / DSM 467 / LMG 4362 / NCIMB 8255 / S1).